The primary structure comprises 171 residues: 3-hydroxydecanoyl-[acyl-carrier-protein] dehydratase (171 aa).

His-71 is an active-site residue.

It belongs to the thioester dehydratase family. FabA subfamily. In terms of assembly, homodimer.

The protein resides in the cytoplasm. It carries out the reaction a (3R)-hydroxyacyl-[ACP] = a (2E)-enoyl-[ACP] + H2O. The catalysed reaction is (3R)-hydroxydecanoyl-[ACP] = (2E)-decenoyl-[ACP] + H2O. It catalyses the reaction (2E)-decenoyl-[ACP] = (3Z)-decenoyl-[ACP]. It participates in lipid metabolism; fatty acid biosynthesis. Necessary for the introduction of cis unsaturation into fatty acids. Catalyzes the dehydration of (3R)-3-hydroxydecanoyl-ACP to E-(2)-decenoyl-ACP and then its isomerization to Z-(3)-decenoyl-ACP. Can catalyze the dehydratase reaction for beta-hydroxyacyl-ACPs with saturated chain lengths up to 16:0, being most active on intermediate chain length. This Sinorhizobium fredii (strain NBRC 101917 / NGR234) protein is 3-hydroxydecanoyl-[acyl-carrier-protein] dehydratase.